The primary structure comprises 177 residues: Large ribosomal subunit protein uL6 (177 aa).

Belongs to the universal ribosomal protein uL6 family. In terms of assembly, part of the 50S ribosomal subunit.

Functionally, this protein binds to the 23S rRNA, and is important in its secondary structure. It is located near the subunit interface in the base of the L7/L12 stalk, and near the tRNA binding site of the peptidyltransferase center. This Aromatoleum aromaticum (strain DSM 19018 / LMG 30748 / EbN1) (Azoarcus sp. (strain EbN1)) protein is Large ribosomal subunit protein uL6.